A 320-amino-acid polypeptide reads, in one-letter code: ATP-dependent 6-phosphofructokinase (320 aa).

G12 provides a ligand contact to ATP. ADP contacts are provided by residues 22 to 26 and 55 to 60; these read RGVVR and RYSVSD. Residues 73 to 74 and 103 to 106 contribute to the ATP site; these read RF and GDGS. Residue D104 participates in Mg(2+) binding. 126 to 128 contributes to the substrate binding site; that stretch reads TID. Catalysis depends on D128, which acts as the Proton acceptor. R155 lines the ADP pocket. Substrate is bound by residues R163 and 170–172; that span reads MGR. ADP is bound by residues 186 to 188, K212, and 214 to 216; these read GCE and KKH. Substrate contacts are provided by residues E223, R244, and 250–253; that span reads HIQR.

It belongs to the phosphofructokinase type A (PFKA) family. ATP-dependent PFK group I subfamily. Prokaryotic clade 'B1' sub-subfamily. As to quaternary structure, homotetramer. The cofactor is Mg(2+).

It is found in the cytoplasm. The catalysed reaction is beta-D-fructose 6-phosphate + ATP = beta-D-fructose 1,6-bisphosphate + ADP + H(+). It functions in the pathway carbohydrate degradation; glycolysis; D-glyceraldehyde 3-phosphate and glycerone phosphate from D-glucose: step 3/4. With respect to regulation, allosterically activated by ADP and other diphosphonucleosides, and allosterically inhibited by phosphoenolpyruvate. Its function is as follows. Catalyzes the phosphorylation of D-fructose 6-phosphate to fructose 1,6-bisphosphate by ATP, the first committing step of glycolysis. This is ATP-dependent 6-phosphofructokinase from Pectobacterium carotovorum subsp. carotovorum (strain PC1).